We begin with the raw amino-acid sequence, 525 residues long: Probable pectinesterase/pectinesterase inhibitor 44 (525 aa).

The first 19 residues, 1–19 (MSCLKYFLILLMLGLCVSS), serve as a signal peptide directing secretion. Residues 30 to 153 (VPASEFVSSI…YSMLRELLPL (124 aa)) form a pectinesterase inhibitor 44 region. An N-linked (GlcNAc...) asparagine glycan is attached at Asn98. Residues 157-192 (EQKPKAVSKPGPIAKGPKAPPGRKLRDTDEDESLQF) are disordered. Residues 212–509 (DVSVALDGTG…FTVSQFIKGN (298 aa)) form a pectinesterase 44 region. Asn222 and Asn278 each carry an N-linked (GlcNAc...) asparagine glycan. Substrate is bound by residues Thr287 and Gln317. Asp340 (proton donor; for pectinesterase activity) is an active-site residue. Cys354 and Cys374 are joined by a disulfide. Asp361 functions as the Nucleophile; for pectinesterase activity in the catalytic mechanism. N-linked (GlcNAc...) asparagine glycans are attached at residues Asn409 and Asn421. Arg429 and Trp431 together coordinate substrate. Residues Asn443, Asn492, and Asn499 are each glycosylated (N-linked (GlcNAc...) asparagine).

It in the N-terminal section; belongs to the PMEI family. This sequence in the C-terminal section; belongs to the pectinesterase family. As to expression, expressed in siliques.

It localises to the secreted. The protein resides in the cell wall. It catalyses the reaction [(1-&gt;4)-alpha-D-galacturonosyl methyl ester](n) + n H2O = [(1-&gt;4)-alpha-D-galacturonosyl](n) + n methanol + n H(+). The protein operates within glycan metabolism; pectin degradation; 2-dehydro-3-deoxy-D-gluconate from pectin: step 1/5. Functionally, acts in the modification of cell walls via demethylesterification of cell wall pectin. The protein is Probable pectinesterase/pectinesterase inhibitor 44 (PME44) of Arabidopsis thaliana (Mouse-ear cress).